The primary structure comprises 362 residues: Methionine import ATP-binding protein MetN (362 aa).

The region spanning 2–241 (IHIENLSKTY…PRHEVTRAMV (240 aa)) is the ABC transporter domain. 38 to 45 (GPSGAGKS) is a binding site for ATP.

The protein belongs to the ABC transporter superfamily. Methionine importer (TC 3.A.1.24) family. As to quaternary structure, the complex is composed of two ATP-binding proteins (MetN), two transmembrane proteins (MetI) and a solute-binding protein (MetQ).

It localises to the cell inner membrane. It carries out the reaction L-methionine(out) + ATP + H2O = L-methionine(in) + ADP + phosphate + H(+). The enzyme catalyses D-methionine(out) + ATP + H2O = D-methionine(in) + ADP + phosphate + H(+). Functionally, part of the ABC transporter complex MetNIQ involved in methionine import. Responsible for energy coupling to the transport system. The sequence is that of Methionine import ATP-binding protein MetN from Bordetella bronchiseptica (strain ATCC BAA-588 / NCTC 13252 / RB50) (Alcaligenes bronchisepticus).